The sequence spans 429 residues: Adenylosuccinate synthetase (429 aa).

GTP-binding positions include G12–K18 and G40–T42. D13 functions as the Proton acceptor in the catalytic mechanism. Positions 13 and 40 each coordinate Mg(2+). IMP-binding positions include D13–K16, N38–H41, T129, R143, Q224, T239, and R303. The active-site Proton donor is H41. Substrate is bound at residue A299 to R305. GTP contacts are provided by residues R305, K331–D333, and S413–G415.

Belongs to the adenylosuccinate synthetase family. In terms of assembly, homodimer. Requires Mg(2+) as cofactor.

Its subcellular location is the cytoplasm. It catalyses the reaction IMP + L-aspartate + GTP = N(6)-(1,2-dicarboxyethyl)-AMP + GDP + phosphate + 2 H(+). It participates in purine metabolism; AMP biosynthesis via de novo pathway; AMP from IMP: step 1/2. Functionally, plays an important role in the de novo pathway of purine nucleotide biosynthesis. Catalyzes the first committed step in the biosynthesis of AMP from IMP. In Desulfosudis oleivorans (strain DSM 6200 / JCM 39069 / Hxd3) (Desulfococcus oleovorans), this protein is Adenylosuccinate synthetase.